Consider the following 162-residue polypeptide: Corticoliberin (162 aa).

An N-terminal signal peptide occupies residues 1-24; it reads MKLNFLVTTVALLVAFPPPYECRA. The propeptide occupies 25 to 119; the sequence is IEGSSNQPAT…ALDSVERERR (95 aa). Phenylalanine 160 is modified (phenylalanine amide).

It belongs to the sauvagine/corticotropin-releasing factor/urotensin I family.

The protein resides in the secreted. Functionally, this hormone from hypothalamus regulates the release of corticotropin from pituitary gland. This is Corticoliberin (crh) from Carassius auratus (Goldfish).